The primary structure comprises 77 residues: MANIKSAIKRAELNVKQNEKNSAQKSAMRTAIKAFEANPSEELYRAASSSIDKAASKGLIHTNKASRDKARLATKLG.

It belongs to the bacterial ribosomal protein bS20 family.

Binds directly to 16S ribosomal RNA. This chain is Small ribosomal subunit protein bS20, found in Streptococcus agalactiae serotype Ia (strain ATCC 27591 / A909 / CDC SS700).